The sequence spans 362 residues: Protein OCA4 (362 aa).

Functionally, required for replication of Brome mosaic virus (BMV). The protein is Protein OCA4 (OCA4) of Saccharomyces cerevisiae (strain ATCC 204508 / S288c) (Baker's yeast).